Consider the following 324-residue polypeptide: tRNA U34 carboxymethyltransferase (324 aa).

Carboxy-S-adenosyl-L-methionine contacts are provided by residues Lys-91, Trp-105, Lys-110, Gly-130, 152-154 (DPS), 181-182 (IE), Met-196, Tyr-200, and Arg-315.

The protein belongs to the class I-like SAM-binding methyltransferase superfamily. CmoB family. In terms of assembly, homotetramer.

It catalyses the reaction carboxy-S-adenosyl-L-methionine + 5-hydroxyuridine(34) in tRNA = 5-carboxymethoxyuridine(34) in tRNA + S-adenosyl-L-homocysteine + H(+). Its function is as follows. Catalyzes carboxymethyl transfer from carboxy-S-adenosyl-L-methionine (Cx-SAM) to 5-hydroxyuridine (ho5U) to form 5-carboxymethoxyuridine (cmo5U) at position 34 in tRNAs. The protein is tRNA U34 carboxymethyltransferase of Aliivibrio salmonicida (strain LFI1238) (Vibrio salmonicida (strain LFI1238)).